Consider the following 394-residue polypeptide: D-mannose isomerase (394 aa).

Active-site proton donor/acceptor residues include His-251 and His-380.

The protein belongs to the N-acylglucosamine 2-epimerase family. Monomer.

It catalyses the reaction D-mannose = D-fructose. The enzyme catalyses D-lyxose = D-xylulose. Functionally, catalyzes the reversible isomerization of D-mannose to D-fructose. Can also isomerize D-lyxose, with lower efficiency. In longer reaction with a higher concentration of enzyme, it can isomerize 4-OH D-mannose derivatives (D-talose and 4-O-monosaccharyl-D-mannose). Cannot use D-glucose. The polypeptide is D-mannose isomerase (Marinomonas mediterranea (strain ATCC 700492 / JCM 21426 / NBRC 103028 / MMB-1)).